The following is a 124-amino-acid chain: Small ribosomal subunit protein uS12 (124 aa).

A disordered region spans residues 1-24 (MPTINQLVRRPRKPSVSANKAPAL). 3-methylthioaspartic acid is present on Asp90.

It belongs to the universal ribosomal protein uS12 family. In terms of assembly, part of the 30S ribosomal subunit. Contacts proteins S8 and S17. May interact with IF1 in the 30S initiation complex.

Its function is as follows. With S4 and S5 plays an important role in translational accuracy. Interacts with and stabilizes bases of the 16S rRNA that are involved in tRNA selection in the A site and with the mRNA backbone. Located at the interface of the 30S and 50S subunits, it traverses the body of the 30S subunit contacting proteins on the other side and probably holding the rRNA structure together. The combined cluster of proteins S8, S12 and S17 appears to hold together the shoulder and platform of the 30S subunit. The chain is Small ribosomal subunit protein uS12 from Anaplasma phagocytophilum (strain HZ).